The primary structure comprises 308 residues: Atrochrysone carboxyl ACP thioesterase (308 aa).

Residues histidine 99, histidine 101, aspartate 103, and histidine 104 each coordinate Zn(2+). The Proton donor/acceptor role is filled by aspartate 103.

The protein belongs to the metallo-beta-lactamase superfamily. It depends on Zn(2+) as a cofactor.

It catalyses the reaction atrochrysone carboxyl-[ACP] + H2O = atrochrysone carboxylate + holo-[ACP] + H(+). The protein operates within secondary metabolite biosynthesis. Functionally, atrochrysone carboxyl ACP thioesterase; part of the gene cluster that mediates the biosynthesis of physcion, a natural anthraquinone fungicide that can prevent plant fungal infections. The pathway begins with the polyketide synthase AcPKS that condenses 8 malonyl-CoA units to synthesize atrochrysone thioester which is released from the synthase by the atrochrysone carboxyl ACP thioesterase AcTE that breaks the thioester bond and leads to free atrochrysone carboxylic acid. Spontaneous decarboxylation of atrochrysone carboxylic acid leads to the formation of atrochrysone. Then, atrochrysone undergoes spontaneous dehydration and oxidation, giving the products emodin anthrone and emodin. The O-methyltransferase AcOMT then methylates the C-6 hydroxyl of emodin to form physcion. In Aspergillus chevalieri (Eurotium chevalieri), this protein is Atrochrysone carboxyl ACP thioesterase.